The chain runs to 36 residues: Photosystem I reaction center subunit VIII (36 aa).

Residues 8 to 28 form a helical membrane-spanning segment; sequence SVLVPLVGLIFPAMAMASLFL.

The protein belongs to the PsaI family.

The protein resides in the plastid. It localises to the chloroplast thylakoid membrane. Functionally, may help in the organization of the PsaL subunit. The protein is Photosystem I reaction center subunit VIII of Daucus carota (Wild carrot).